The sequence spans 473 residues: Photosystem II CP43 reaction center protein (473 aa).

A propeptide spanning residues 1–14 is cleaved from the precursor; the sequence is MKTLYSLRRFYHVE. Residue threonine 15 is modified to N-acetylthreonine. Residue threonine 15 is modified to Phosphothreonine. The next 5 helical transmembrane spans lie at 69–93, 134–155, 178–200, 255–275, and 291–312; these read LFEV…PHLA, LLGP…KDRN, KALF…RKIT, KPFA…LSYS, and WFNN…ASQA. Glutamate 367 lines the [CaMn4O5] cluster pocket. A helical transmembrane segment spans residues 447 to 471; it reads RARAAAAGFEKGIDRDFEPVLSMTP.

Belongs to the PsbB/PsbC family. PsbC subfamily. In terms of assembly, PSII is composed of 1 copy each of membrane proteins PsbA, PsbB, PsbC, PsbD, PsbE, PsbF, PsbH, PsbI, PsbJ, PsbK, PsbL, PsbM, PsbT, PsbX, PsbY, PsbZ, Psb30/Ycf12, at least 3 peripheral proteins of the oxygen-evolving complex and a large number of cofactors. It forms dimeric complexes. Requires Binds multiple chlorophylls and provides some of the ligands for the Ca-4Mn-5O cluster of the oxygen-evolving complex. It may also provide a ligand for a Cl- that is required for oxygen evolution. PSII binds additional chlorophylls, carotenoids and specific lipids. as cofactor.

The protein localises to the plastid. The protein resides in the chloroplast thylakoid membrane. Its function is as follows. One of the components of the core complex of photosystem II (PSII). It binds chlorophyll and helps catalyze the primary light-induced photochemical processes of PSII. PSII is a light-driven water:plastoquinone oxidoreductase, using light energy to abstract electrons from H(2)O, generating O(2) and a proton gradient subsequently used for ATP formation. This Fagopyrum esculentum subsp. ancestrale (Wild buckwheat) protein is Photosystem II CP43 reaction center protein.